Here is a 472-residue protein sequence, read N- to C-terminus: F420-non-reducing hydrogenase subunit A (472 aa).

Ni(2+)-binding residues include Cys-61, Cys-64, Cys-442, and Cys-445.

Belongs to the [NiFe]/[NiFeSe] hydrogenase large subunit family. As to quaternary structure, the F420-non-reducing hydrogenase is composed of three subunits; MvhA, MvhD and MvhG. It forms a complex with the heterodisulfide reductase (hdr). The cofactor is Ni(2+).

In terms of biological role, part of a complex that provides reducing equivalents for heterodisulfide reductase. This is F420-non-reducing hydrogenase subunit A (mvhA) from Methanothermobacter marburgensis (strain ATCC BAA-927 / DSM 2133 / JCM 14651 / NBRC 100331 / OCM 82 / Marburg) (Methanobacterium thermoautotrophicum).